The following is a 201-amino-acid chain: NADH-quinone oxidoreductase subunit C (201 aa).

Belongs to the complex I 30 kDa subunit family. As to quaternary structure, NDH-1 is composed of 14 different subunits. Subunits NuoB, C, D, E, F, and G constitute the peripheral sector of the complex.

It localises to the cell inner membrane. The catalysed reaction is a quinone + NADH + 5 H(+)(in) = a quinol + NAD(+) + 4 H(+)(out). Its function is as follows. NDH-1 shuttles electrons from NADH, via FMN and iron-sulfur (Fe-S) centers, to quinones in the respiratory chain. The immediate electron acceptor for the enzyme in this species is believed to be ubiquinone. Couples the redox reaction to proton translocation (for every two electrons transferred, four hydrogen ions are translocated across the cytoplasmic membrane), and thus conserves the redox energy in a proton gradient. This chain is NADH-quinone oxidoreductase subunit C, found in Aromatoleum aromaticum (strain DSM 19018 / LMG 30748 / EbN1) (Azoarcus sp. (strain EbN1)).